The primary structure comprises 365 residues: MKALILVGGYGTRLRPLTLTQPKPLVEFANKPMMLHQMEALAEVGVDTVVLAVSYRAEQLEQEMTVHADRLGVKLIFSLEEEPLGTAGPLALARKHLEGDAPFFVLNSDVICDFPFKQMVEFHKNHGKEGTIAVTKVEEPSKYGVVVFDQDKGKIDDFVEKPQEYVGNKINAGLYIFSSKILDRIPLKPTSIEKEIFPEMAFSGNLYAFVLPGFWMDVGQPKDFLKGMSLFLNHCHTTKSDKLETGSNIHPTATIRGNVMVDPSATVGENCVIGPDVVIGPRVKIEGGVRILHSTILSDSSIGNYSWVSGSIVGRKCHIGSWVRIENICVIGDDVVVKDELYLNGASVLPHKSIAVNVPSKDIIM.

The tract at residues 2–221 is substrate-binding domain; that stretch reads KALILVGGYG…PGFWMDVGQP (220 aa). A GDP-alpha-D-mannose-binding site is contributed by aspartate 109. Aspartate 109 serves as a coordination point for Mg(2+). Residue lysine 161 is part of the active site. Aspartate 217 serves as a coordination point for GDP-alpha-D-mannose. Aspartate 217 contributes to the Mg(2+) binding site. Residues 244–365 are hexapeptide repeat domain; that stretch reads ETGSNIHPTA…VNVPSKDIIM (122 aa).

Belongs to the transferase hexapeptide repeat family. In terms of assembly, component of the GMPPA-GMPPB mannose-1-phosphate guanylyltransferase complex composed of 4 GMPPA subunits and 8 tag-335/GMPPB subunits; the complex is organized into three layers, a central layer made up of 2 GMPPA dimers sandwiched between two layers each made up of 2 tag-335/GMPPB dimers. Catalytic activity of tag-335/GMPPB is reduced when part of the complex and binding of GDP-alpha-D-Mannose by GMPPA induces allosteric feedback inhibition of tag-335/GMPPB. It depends on Mg(2+) as a cofactor.

It catalyses the reaction alpha-D-mannose 1-phosphate + GTP + H(+) = GDP-alpha-D-mannose + diphosphate. Its pathway is nucleotide-sugar biosynthesis; GDP-alpha-D-mannose biosynthesis; GDP-alpha-D-mannose from alpha-D-mannose 1-phosphate (GTP route): step 1/1. Its activity is regulated as follows. Enzyme activity is reduced by incorporation into the GMPPA-GMPPB mannose-1-phosphate guanylyltransferase complex. Allosterically inhibited, when part of the GMPPA-GMPPB complex, by GDP-alpha-D-mannose binding to GMPPA. Functionally, catalytic subunit of the GMPPA-GMPPB mannose-1-phosphate guanylyltransferase complex. Catalyzes the formation of GDP-mannose, an essential precursor of glycan moieties of glycoproteins and glycolipids. Can catalyze the reverse reaction in vitro. Together with GMPPA regulates GDP-alpha-D-mannose levels. This chain is Mannose-1-phosphate guanylyltransferase catalytic subunit beta (tag-335), found in Caenorhabditis elegans.